Consider the following 432-residue polypeptide: Trigger factor (432 aa).

One can recognise a PPIase FKBP-type domain in the interval 161 to 246 (EDRVTIDFTG…LKKVEERELP (86 aa)).

This sequence belongs to the FKBP-type PPIase family. Tig subfamily. As to quaternary structure, homodimer and monomer. In vivo most of the ribosomes are in complex with monomeric TF. Uncomplexed TF, however, is in a monomer-dimer equilibrium with approximately two thirds of TF existing in a dimeric state.

The protein localises to the cytoplasm. It catalyses the reaction [protein]-peptidylproline (omega=180) = [protein]-peptidylproline (omega=0). Involved in protein export. Acts as a chaperone by maintaining the newly synthesized protein in an open conformation. Functions as a peptidyl-prolyl cis-trans isomerase. The sequence is that of Trigger factor from Shigella boydii serotype 4 (strain Sb227).